A 318-amino-acid chain; its full sequence is Taste receptor type 2 member 60 (318 aa).

The Extracellular portion of the chain corresponds to 1–7 (MNGDHMV). Residues 8–28 (LGSSVTDKKAIILVTILLLLR) traverse the membrane as a helical segment. The Cytoplasmic segment spans residues 29–40 (LVAIAGNGFITA). A helical membrane pass occupies residues 41-61 (ALGVEWVLRRMLLPCDKLLVS). At 62-88 (LGASHFCLQSVVMGKTIYVFLYPMAFP) the chain is on the extracellular side. Residues 89 to 109 (YNPVLQFLAFQWDFLNAATLW) traverse the membrane as a helical segment. The Cytoplasmic portion of the chain corresponds to 110–128 (FSTWLSVFYCVKIATFTHP). The chain crosses the membrane as a helical span at residues 129 to 149 (VFFWLKHKLSGWLPWMVFSYV). The Extracellular segment spans residues 150–183 (GLSSFTTILFFIGNHRMYQNYLKNHLQPWNVTGN). Residue Asn-179 is glycosylated (N-linked (GlcNAc...) asparagine). The helical transmembrane segment at 184 to 204 (SIRSYCEKFYLFPLKMITWTM) threads the bilayer. The Cytoplasmic segment spans residues 205–234 (PTAVFFICMILLITSLGRHMKKALLTTSGF). A helical membrane pass occupies residues 235–255 (REPSVQAHIKALLALLSFAML). Residues 256–264 (FISYFLSLV) are Extracellular-facing. The chain crosses the membrane as a helical span at residues 265–285 (FSAAGIFPPLDFKFWVWESVI). The Cytoplasmic portion of the chain corresponds to 286–318 (YLCAAVHPIILLFSNCRLRAVLKSRRSSRCGTP).

Belongs to the G-protein coupled receptor T2R family.

It is found in the membrane. Receptor that may play a role in the perception of bitterness and is gustducin-linked. May play a role in sensing the chemical composition of the gastrointestinal content. The activity of this receptor may stimulate alpha gustducin, mediate PLC-beta-2 activation and lead to the gating of TRPM5. The sequence is that of Taste receptor type 2 member 60 (TAS2R60) from Pan troglodytes (Chimpanzee).